Here is a 173-residue protein sequence, read N- to C-terminus: Translation initiation factor IF-3 (173 aa).

The protein belongs to the IF-3 family. In terms of assembly, monomer.

The protein localises to the cytoplasm. Its function is as follows. IF-3 binds to the 30S ribosomal subunit and shifts the equilibrium between 70S ribosomes and their 50S and 30S subunits in favor of the free subunits, thus enhancing the availability of 30S subunits on which protein synthesis initiation begins. The chain is Translation initiation factor IF-3 from Enterococcus faecalis (strain ATCC 700802 / V583).